A 346-amino-acid polypeptide reads, in one-letter code: Ketol-acid reductoisomerase (NADP(+)) (346 aa).

The KARI N-terminal Rossmann domain occupies 1-189; it reads MQVYYDRDAD…GGGRSGIIET (189 aa). Residues 24–27, Arg-48, Ser-51, Thr-53, and 83–86 contribute to the NADP(+) site; these read YGSQ and DEHQ. His-108 is an active-site residue. Gly-134 provides a ligand contact to NADP(+). Residues 190 to 335 form the KARI C-terminal knotted domain; that stretch reads TFKEECETDL…EKLRAMMPWI (146 aa). Positions 198, 202, 234, and 238 each coordinate Mg(2+). Residue Ser-259 coordinates substrate.

It belongs to the ketol-acid reductoisomerase family. Mg(2+) serves as cofactor.

The enzyme catalyses (2R)-2,3-dihydroxy-3-methylbutanoate + NADP(+) = (2S)-2-acetolactate + NADPH + H(+). It carries out the reaction (2R,3R)-2,3-dihydroxy-3-methylpentanoate + NADP(+) = (S)-2-ethyl-2-hydroxy-3-oxobutanoate + NADPH + H(+). The protein operates within amino-acid biosynthesis; L-isoleucine biosynthesis; L-isoleucine from 2-oxobutanoate: step 2/4. Its pathway is amino-acid biosynthesis; L-valine biosynthesis; L-valine from pyruvate: step 2/4. Functionally, involved in the biosynthesis of branched-chain amino acids (BCAA). Catalyzes an alkyl-migration followed by a ketol-acid reduction of (S)-2-acetolactate (S2AL) to yield (R)-2,3-dihydroxy-isovalerate. In the isomerase reaction, S2AL is rearranged via a Mg-dependent methyl migration to produce 3-hydroxy-3-methyl-2-ketobutyrate (HMKB). In the reductase reaction, this 2-ketoacid undergoes a metal-dependent reduction by NADPH to yield (R)-2,3-dihydroxy-isovalerate. The protein is Ketol-acid reductoisomerase (NADP(+)) of Sphingopyxis alaskensis (strain DSM 13593 / LMG 18877 / RB2256) (Sphingomonas alaskensis).